The primary structure comprises 522 residues: Glycogen synthase (522 aa).

Residues M1–G29 are disordered. Position 58 (K58) interacts with ADP-alpha-D-glucose.

It belongs to the glycosyltransferase 1 family. Bacterial/plant glycogen synthase subfamily.

The enzyme catalyses [(1-&gt;4)-alpha-D-glucosyl](n) + ADP-alpha-D-glucose = [(1-&gt;4)-alpha-D-glucosyl](n+1) + ADP + H(+). The protein operates within glycan biosynthesis; glycogen biosynthesis. In terms of biological role, synthesizes alpha-1,4-glucan chains using ADP-glucose. The sequence is that of Glycogen synthase from Pseudomonas fluorescens (strain ATCC BAA-477 / NRRL B-23932 / Pf-5).